A 338-amino-acid chain; its full sequence is MLGRCFPPDTKEKQQLRMTKLCDPAESELSPFLITLILAVLLAEYLIGIIANGFIMAIHAAEWVQNKAVSTSGRILVFLSVSRIALQSLMMLEITISSTSLSFYSEDAVYYAFKISFIFLNFCSLWFAAWLSFFYFVKIANFSYPLFLKLRWRITGLIPWLLWLSVFISFSHSMFCINICTVYCNNSFPIHSSNSTKKTYLSEINVVGLAFFFNLGIVTPLIMFILTATLLILSLKRHTLHMGSNATGSNDPSMEAHMGAIKAISYFLILYIFNAVALFIYLSNMFDINSLWNNLCQIIMAAYPAGHSILPIQDNPGLRRAWKRLQLRLHLYPKEWTL.

Residues 1-30 (MLGRCFPPDTKEKQQLRMTKLCDPAESELS) are Extracellular-facing. A helical membrane pass occupies residues 31–51 (PFLITLILAVLLAEYLIGIIA). Residues 52 to 74 (NGFIMAIHAAEWVQNKAVSTSGR) are Cytoplasmic-facing. The chain crosses the membrane as a helical span at residues 75-95 (ILVFLSVSRIALQSLMMLEIT). Topologically, residues 96–116 (ISSTSLSFYSEDAVYYAFKIS) are extracellular. The chain crosses the membrane as a helical span at residues 117–137 (FIFLNFCSLWFAAWLSFFYFV). Over 138-156 (KIANFSYPLFLKLRWRITG) the chain is Cytoplasmic. The helical transmembrane segment at 157–177 (LIPWLLWLSVFISFSHSMFCI) threads the bilayer. Residues 178 to 205 (NICTVYCNNSFPIHSSNSTKKTYLSEIN) are Extracellular-facing. Residues asparagine 185 and asparagine 194 are each glycosylated (N-linked (GlcNAc...) asparagine). A helical transmembrane segment spans residues 206 to 226 (VVGLAFFFNLGIVTPLIMFIL). The Cytoplasmic segment spans residues 227–262 (TATLLILSLKRHTLHMGSNATGSNDPSMEAHMGAIK). The helical transmembrane segment at 263 to 283 (AISYFLILYIFNAVALFIYLS) threads the bilayer. The Extracellular segment spans residues 284–291 (NMFDINSL). A helical transmembrane segment spans residues 292–312 (WNNLCQIIMAAYPAGHSILPI). The Cytoplasmic segment spans residues 313-338 (QDNPGLRRAWKRLQLRLHLYPKEWTL).

This sequence belongs to the G-protein coupled receptor T2R family.

It is found in the membrane. Receptor that may play a role in the perception of bitterness and is gustducin-linked. May play a role in sensing the chemical composition of the gastrointestinal content. The activity of this receptor may stimulate alpha gustducin, mediate PLC-beta-2 activation and lead to the gating of TRPM5. This Pan paniscus (Pygmy chimpanzee) protein is Taste receptor type 2 member 39 (TAS2R39).